The primary structure comprises 257 residues: Snake venom serine protease Haly-2 (257 aa).

The N-terminal stretch at 1–18 (MVLIRVLANLLILQLSYA) is a signal peptide. Positions 19–24 (QKSSEL) are excised as a propeptide. One can recognise a Peptidase S1 domain in the interval 25 to 248 (IIGGDECNIN…HLEWIRSIIA (224 aa)). 6 disulfides stabilise this stretch: Cys-31/Cys-162, Cys-49/Cys-65, Cys-97/Cys-255, Cys-141/Cys-209, Cys-173/Cys-188, and Cys-199/Cys-224. The Charge relay system role is filled by His-64. Residue Asn-100 is glycosylated (N-linked (GlcNAc...) asparagine). Asp-109 acts as the Charge relay system in catalysis. Residue Ser-203 is the Charge relay system of the active site.

This sequence belongs to the peptidase S1 family. Snake venom subfamily. As to quaternary structure, monomer. As to expression, expressed by the venom gland.

It is found in the secreted. Its function is as follows. Snake venom serine protease that may act in the hemostasis system of the prey. The chain is Snake venom serine protease Haly-2 from Gloydius brevicauda (Korean slamosa snake).